The chain runs to 412 residues: Tyrosine--tRNA ligase (412 aa).

A 'HIGH' region motif is present at residues 48-57 (PSRPDLHLGH). The 'KMSKS' region signature appears at 232–236 (KMSKS). K235 contacts ATP. Residues 342-405 (VGLLNLMRHA…GKRRFARIRP (64 aa)) enclose the S4 RNA-binding domain.

The protein belongs to the class-I aminoacyl-tRNA synthetase family. TyrS type 2 subfamily. In terms of assembly, homodimer.

Its subcellular location is the cytoplasm. The enzyme catalyses tRNA(Tyr) + L-tyrosine + ATP = L-tyrosyl-tRNA(Tyr) + AMP + diphosphate + H(+). In terms of biological role, catalyzes the attachment of tyrosine to tRNA(Tyr) in a two-step reaction: tyrosine is first activated by ATP to form Tyr-AMP and then transferred to the acceptor end of tRNA(Tyr). This Salinibacter ruber (strain DSM 13855 / M31) protein is Tyrosine--tRNA ligase.